A 408-amino-acid chain; its full sequence is G2/mitotic-specific cyclin-B (408 aa).

The protein belongs to the cyclin family. Cyclin AB subfamily. As to quaternary structure, interacts with the CDC2 protein kinase to form a serine/threonine kinase holoenzyme complex also known as maturation promoting factor (MPF). The cyclin subunit imparts substrate specificity to the complex.

Functionally, essential for the control of the cell cycle at the G2/M (mitosis) transition. The chain is G2/mitotic-specific cyclin-B from Patella vulgata (Common limpet).